The primary structure comprises 476 residues: MASPFSGALQLTDLDDFIGPSQNCIKPVKVAKKPGSGIAKIHIEDDGSYFQVNQDGRTQKLEKAKVSLNDCLACSGCVTSAETVLITQQSHEELRKVLDANKEAAPGQQRLVVVSISPQSRASLAARFRLDPTDTARKLTSFFKKIGVHFVFDTAFARNFSLLESQKEFVQRFREQANSREALPVLASACPGWICYAEKTHGNFILPYISTARSPQQVMGSLVKDFFAQQQLLTPDKIYHVTVMPCYDKKLEASRPDFFNQEYQTRDVDCVLTTGEVFRLLEEEGVSLTELEPAPLDGLTSSVSAEEPSSHRGGGSGGYLEHVFRHAAQELFGIHVAEVTYQPLRNKDFQEVTLEREGQVLLRFAVAYGFRNIQNLVQKLKRGRCPYHYVEVMACPSGCLNGGGQLKAPDTEGSELLQQLERLYSMVRTEAPEDAPGVQELYQHWLQGEDSERASRLLHTQYHAVEKPSSGLSIRW.

An N-acetylalanine modification is found at A2. C24, C71, C74, C77, C190, and C246 together coordinate [4Fe-4S] cluster. A disordered region spans residues 297 to 316; sequence DGLTSSVSAEEPSSHRGGGS. [4Fe-4S] cluster-binding residues include C395 and C399.

It belongs to the NARF family. As to quaternary structure, external component of the CIA complex. In the CIA complex, interacts directly with CIAO1 and MMS19.

Functionally, component of the cytosolic iron-sulfur protein assembly (CIA) complex, a multiprotein complex that mediates the incorporation of iron-sulfur cluster into extramitochondrial Fe/S proteins. Seems to negatively regulate the level of HIF1A expression, although this effect could be indirect. This Mus musculus (Mouse) protein is Cytosolic iron-sulfur assembly component 3 (Ciao3).